Reading from the N-terminus, the 147-residue chain is Protein SprT-like (147 aa).

One can recognise a SprT-like domain in the interval 5 to 142 (DYVNEVSLED…SFCRGHLKEI (138 aa)). Histidine 64 serves as a coordination point for Zn(2+). The active site involves glutamate 65. Histidine 68 contributes to the Zn(2+) binding site.

This sequence belongs to the SprT family. Requires Zn(2+) as cofactor.

The protein localises to the cytoplasm. This chain is Protein SprT-like, found in Streptococcus uberis (strain ATCC BAA-854 / 0140J).